A 610-amino-acid chain; its full sequence is MRYIAGIDIGNSSTEVALARQDETGALTITHSALAETTGIKGTLRNVFGIQEALALVAKRAGINVRDISLIRINEATPVIGDVAMETITETIITESTMIGHNPKTPGGAGLGVGITITPEELLTRPADSSYILVVSSAFDFADIANVINASMRAGYQITGVILQRDDGVLVSNRLEKSLPIVDEVLYIDRIPLGMLAAIEVAVPGKVIETLSNPYGIATVFNLNADETKNIVPMARALIGNRSAVVVKTPSGDVKARAIPAGNLELQAQGRTVRVDVAAGAEAIMKAVDGCGKLDNVTGEAGTNIGGMLEHVRQTMAELTNKPSSEIFIQDLLAVDTSVPVSVTGGLAGEFSLEQAVGIASMVKSDRLQMAMIAREIEQKLNIDVQIGGAEAEAAILGALTTPGTTRPLAILDLGAGSTDASIINPKGEIIATHLAGAGDMVTMIIARELGLEDRYLAEEIKKYPLAKVESLFHLRHEDGSVQFFPTPLPPAVFARVCVVKPDELVPLPGDLALEKVRAIRRSAKERVFVTNALRALRQVSPTGNIRDIPFVVLVGGSSLDFEVPQLVTDALAHYRLVAGRGNIRGSEGPRNAVATGLILSWHKEFAHGQ.

11-13 (NSS) lines the ATP pocket. Residues T105, D166, and D183 each coordinate Mg(2+). ATP contacts are provided by residues 459–462 (EEIK), 557–558 (GS), and R591.

Belongs to the DdrA/PduG family. As to quaternary structure, forms a heterotetramer PduG(2)/PduH(2). The cofactor is Mg(2+).

It is found in the bacterial microcompartment. It catalyses the reaction ATP + H2O = ADP + phosphate + H(+). It participates in polyol metabolism; 1,2-propanediol degradation. Large subunit of the propanediol dehydratase-reactivating factor (DDR), which reactivates suicidally inhibited adenosylcobalamin-dependent propanediol dehydratase (diol dehydratase, DDH) found in the bacterial microcompartment (BMC) dedicated to 1,2-propanediol (1,2-PD) degradation. Reactivates inactivated DDH in the presence of ATP, Mg(2+) and free adenosylcobalamin (AdoCbl), by mediating the exchange of the tightly bound damaged cofactor AdoCbl for a free intact one. This subunit contains the adenosine nucleotide binding site. In terms of biological role, the 1,2-PD-specific bacterial microcompartment (BMC) concentrates low levels of 1,2-PD catabolic enzymes, concentrates volatile reaction intermediates thus enhancing pathway flux and keeps the level of toxic, mutagenic propionaldehyde low. This Salmonella typhimurium (strain LT2 / SGSC1412 / ATCC 700720) protein is Propanediol dehydratase-reactivating factor large subunit.